The chain runs to 167 residues: Endoribonuclease YbeY (167 aa).

A disordered region spans residues Gly-64 to Gly-101. Positions Glu-90–Pro-99 are enriched in acidic residues. Zn(2+) is bound by residues His-131, His-135, and His-141.

It belongs to the endoribonuclease YbeY family. Zn(2+) serves as cofactor.

The protein localises to the cytoplasm. Single strand-specific metallo-endoribonuclease involved in late-stage 70S ribosome quality control and in maturation of the 3' terminus of the 16S rRNA. The sequence is that of Endoribonuclease YbeY from Cereibacter sphaeroides (strain ATCC 17023 / DSM 158 / JCM 6121 / CCUG 31486 / LMG 2827 / NBRC 12203 / NCIMB 8253 / ATH 2.4.1.) (Rhodobacter sphaeroides).